An 885-amino-acid polypeptide reads, in one-letter code: Alanine--tRNA ligase (885 aa).

The segment covering 426-444 has biased composition (basic and acidic residues); that stretch reads QEQKTRARQDRREKQRGGA. A disordered region spans residues 426-445; the sequence is QEQKTRARQDRREKQRGGAE. The Zn(2+) site is built by histidine 568, histidine 572, cysteine 671, and histidine 675.

Belongs to the class-II aminoacyl-tRNA synthetase family. Requires Zn(2+) as cofactor.

Its subcellular location is the cytoplasm. It catalyses the reaction tRNA(Ala) + L-alanine + ATP = L-alanyl-tRNA(Ala) + AMP + diphosphate. Its function is as follows. Catalyzes the attachment of alanine to tRNA(Ala) in a two-step reaction: alanine is first activated by ATP to form Ala-AMP and then transferred to the acceptor end of tRNA(Ala). Also edits incorrectly charged Ser-tRNA(Ala) and Gly-tRNA(Ala) via its editing domain. The chain is Alanine--tRNA ligase from Chlorobium phaeovibrioides (strain DSM 265 / 1930) (Prosthecochloris vibrioformis (strain DSM 265)).